A 340-amino-acid polypeptide reads, in one-letter code: Phenylalanine--tRNA ligase alpha subunit (340 aa).

Position 255 (Glu-255) interacts with Mg(2+).

The protein belongs to the class-II aminoacyl-tRNA synthetase family. Phe-tRNA synthetase alpha subunit type 1 subfamily. Tetramer of two alpha and two beta subunits. It depends on Mg(2+) as a cofactor.

It is found in the cytoplasm. It carries out the reaction tRNA(Phe) + L-phenylalanine + ATP = L-phenylalanyl-tRNA(Phe) + AMP + diphosphate + H(+). This is Phenylalanine--tRNA ligase alpha subunit from Moorella thermoacetica (strain ATCC 39073 / JCM 9320).